We begin with the raw amino-acid sequence, 478 residues long: tRNA (guanine-N(7)-)-methyltransferase non-catalytic subunit TRM82 (478 aa).

4 WD repeats span residues 14–53 (SSAD…VLDP), 73–113 (EQKF…GLQQ), 217–258 (GHVS…HIIE), and 263–301 (GHEE…LNEK).

This sequence belongs to the WD repeat TRM82 family. In terms of assembly, forms a heterodimer with the catalytic subunit TRM8.

Its subcellular location is the nucleus. It participates in tRNA modification; N(7)-methylguanine-tRNA biosynthesis. In terms of biological role, required for the formation of N(7)-methylguanine at position 46 (m7G46) in tRNA. In the complex, it is required to stabilize and induce conformational changes of the catalytic subunit. The protein is tRNA (guanine-N(7)-)-methyltransferase non-catalytic subunit TRM82 of Phaeosphaeria nodorum (strain SN15 / ATCC MYA-4574 / FGSC 10173) (Glume blotch fungus).